An 81-amino-acid polypeptide reads, in one-letter code: Photosystem I iron-sulfur center (81 aa).

2 4Fe-4S ferredoxin-type domains span residues serine 2–tryptophan 31 and isoleucine 39–tyrosine 68. 8 residues coordinate [4Fe-4S] cluster: cysteine 11, cysteine 14, cysteine 17, cysteine 21, cysteine 48, cysteine 51, cysteine 54, and cysteine 58.

In terms of assembly, the eukaryotic PSI reaction center is composed of at least 11 subunits. It depends on [4Fe-4S] cluster as a cofactor.

It localises to the plastid. The protein localises to the chloroplast thylakoid membrane. It carries out the reaction reduced [plastocyanin] + hnu + oxidized [2Fe-2S]-[ferredoxin] = oxidized [plastocyanin] + reduced [2Fe-2S]-[ferredoxin]. Functionally, apoprotein for the two 4Fe-4S centers FA and FB of photosystem I (PSI); essential for photochemical activity. FB is the terminal electron acceptor of PSI, donating electrons to ferredoxin. The C-terminus interacts with PsaA/B/D and helps assemble the protein into the PSI complex. Required for binding of PsaD and PsaE to PSI. PSI is a plastocyanin/cytochrome c6-ferredoxin oxidoreductase, converting photonic excitation into a charge separation, which transfers an electron from the donor P700 chlorophyll pair to the spectroscopically characterized acceptors A0, A1, FX, FA and FB in turn. This chain is Photosystem I iron-sulfur center, found in Guillardia theta (Cryptophyte).